We begin with the raw amino-acid sequence, 481 residues long: Chromosomal replication initiator protein DnaA (481 aa).

Positions 1 to 71 are domain I, interacts with DnaA modulators; the sequence is MTDLSAFWPQ…ETFAEDILGR (71 aa). Positions 71-143 are domain II; that stretch reads RPVTIELRIG…PAIGGGHEST (73 aa). Residues 86–96 are compositionally biased toward low complexity; sequence ASAPAAASPRS. Residues 86 to 110 form a disordered region; it reads ASAPAAASPRSPGRPAPAPVAATPT. Residues 144-361 form a domain III, AAA+ region region; it reads RLNPAFTFES…GALKRVVAYS (218 aa). Residues Gly-189, Gly-191, Lys-192, and Thr-193 each contribute to the ATP site. The segment at 362–481 is domain IV, binds dsDNA; it reads RFSNQPISLD…YAALQQMLRN (120 aa).

Belongs to the DnaA family. As to quaternary structure, oligomerizes as a right-handed, spiral filament on DNA at oriC.

The protein resides in the cytoplasm. Plays an essential role in the initiation and regulation of chromosomal replication. ATP-DnaA binds to the origin of replication (oriC) to initiate formation of the DNA replication initiation complex once per cell cycle. Binds the DnaA box (a 9 base pair repeat at the origin) and separates the double-stranded (ds)DNA. Forms a right-handed helical filament on oriC DNA; dsDNA binds to the exterior of the filament while single-stranded (ss)DNA is stabiized in the filament's interior. The ATP-DnaA-oriC complex binds and stabilizes one strand of the AT-rich DNA unwinding element (DUE), permitting loading of DNA polymerase. After initiation quickly degrades to an ADP-DnaA complex that is not apt for DNA replication. Binds acidic phospholipids. The sequence is that of Chromosomal replication initiator protein DnaA from Laribacter hongkongensis (strain HLHK9).